The following is a 200-amino-acid chain: Elongation factor Ts (200 aa).

The tract at residues 83 to 86 (TDFA) is involved in Mg(2+) ion dislocation from EF-Tu.

It belongs to the EF-Ts family.

Its subcellular location is the cytoplasm. Functionally, associates with the EF-Tu.GDP complex and induces the exchange of GDP to GTP. It remains bound to the aminoacyl-tRNA.EF-Tu.GTP complex up to the GTP hydrolysis stage on the ribosome. This Syntrophobacter fumaroxidans (strain DSM 10017 / MPOB) protein is Elongation factor Ts.